A 439-amino-acid chain; its full sequence is GTPase Der (439 aa).

2 consecutive EngA-type G domains span residues 4–168 (PIVA…KDDE) and 177–352 (INIA…DNYT). Residues 10-17 (GRPNVGKS), 57-61 (DTGGI), 120-123 (NKID), 183-190 (GKPNVGKS), 230-234 (DTAGL), and 295-298 (NKWD) each bind GTP. The KH-like domain occupies 353 to 437 (KRVKTGVLND…GIKLEFRERK (85 aa)).

Belongs to the TRAFAC class TrmE-Era-EngA-EngB-Septin-like GTPase superfamily. EngA (Der) GTPase family. As to quaternary structure, associates with the 50S ribosomal subunit.

GTPase that plays an essential role in the late steps of ribosome biogenesis. The polypeptide is GTPase Der (Clostridium botulinum (strain Okra / Type B1)).